The primary structure comprises 59 residues: Large ribosomal subunit protein bL32 (59 aa).

The disordered stretch occupies residues 1–25 (MAVQQNKKSPSKRGMHRAHDFLTAP).

It belongs to the bacterial ribosomal protein bL32 family.

The sequence is that of Large ribosomal subunit protein bL32 from Azoarcus sp. (strain BH72).